Here is a 135-residue protein sequence, read N- to C-terminus: Histone H2A.4 (135 aa).

The protein belongs to the histone H2A family. As to quaternary structure, the nucleosome is a histone octamer containing two molecules each of H2A, H2B, H3 and H4 assembled in one H3-H4 heterotetramer and two H2A-H2B heterodimers. The octamer wraps approximately 147 bp of DNA. Expressed preferentially in meristematic tissues of young seedlings, in stigma and ovary but not in pollen.

The protein resides in the nucleus. It is found in the chromosome. Core component of nucleosome. Nucleosomes wrap and compact DNA into chromatin, limiting DNA accessibility to the cellular machineries which require DNA as a template. Histones thereby play a central role in transcription regulation, DNA repair, DNA replication and chromosomal stability. DNA accessibility is regulated via a complex set of post-translational modifications of histones, also called histone code, and nucleosome remodeling. The polypeptide is Histone H2A.4 (TH254) (Triticum aestivum (Wheat)).